The chain runs to 365 residues: LIM and cysteine-rich domains protein 1 (365 aa).

Phosphoserine is present on serine 16. Residues 99–206 (MIMTNPIATG…GEVALPGQGG (108 aa)) form the PET domain. The segment at 200-235 (ALPGQGGLPKEEGKQQEKPEGAETTAATTNGSLSDP) is disordered. The span at 208 to 220 (PKEEGKQQEKPEG) shows a compositional bias: basic and acidic residues. LIM zinc-binding domains follow at residues 241–306 (YVCE…SLRP) and 307–365 (RCSG…SKRS).

As to quaternary structure, interacts with GATA1 and GATA4. Interacts with beta-dystroglycan. Interacts with GATA6. As to expression, expressed in the heart (at protein level). Expressed in many tissues with highest abundance in skeletal muscle.

It is found in the cytoplasm. It localises to the nucleus. Its function is as follows. Transcriptional cofactor that restricts GATA6 function by inhibiting DNA-binding, resulting in repression of GATA6 transcriptional activation of downstream target genes. Represses GATA6-mediated trans activation of lung- and cardiac tissue-specific promoters. Inhibits DNA-binding by GATA4 and GATA1 to the cTNC promoter. Plays a critical role in the development of cardiac hypertrophy via activation of calcineurin/nuclear factor of activated T-cells signaling pathway. The polypeptide is LIM and cysteine-rich domains protein 1 (LMCD1) (Homo sapiens (Human)).